Here is a 109-residue protein sequence, read N- to C-terminus: Set1 complex component sdc1 (109 aa).

Positions 49–109 (QQKQKEIVNQ…SSNPGKNSAS (61 aa)) are disordered. Polar residues predominate over residues 73–87 (STPTMAEQVQTSFSN). Low complexity predominate over residues 88 to 101 (PASTPLTQTSSPSS).

This sequence belongs to the dpy-30 family. Component of the COMPASS (Set1C) complex composed of ash2, sdc1, set1, shg1, spp1, swd1, swd2 and swd3. Component of the Lid2 complex composed of ash2, jmj3, lid2, sdc1 and snt2.

The protein resides in the nucleus. Functionally, the COMPASS (Set1C) complex specifically mono-, di- and trimethylates histone H3 to form H3K4me1/2/3, which subsequently activates gene expression by regulating transcription elongation and plays a role in telomere length maintenance. This chain is Set1 complex component sdc1 (sdc1), found in Schizosaccharomyces pombe (strain 972 / ATCC 24843) (Fission yeast).